Consider the following 318-residue polypeptide: Beta-galactosidase small subunit (318 aa).

It belongs to the bacterial beta-galactosidase small subunit family. In terms of assembly, heterodimer of a large (LacL) and a small subunit (LacM).

The catalysed reaction is Hydrolysis of terminal non-reducing beta-D-galactose residues in beta-D-galactosides.. Its function is as follows. Component of a beta-galactosidase. The sequence is that of Beta-galactosidase small subunit from Latilactobacillus sakei (Lactobacillus sakei).